We begin with the raw amino-acid sequence, 2090 residues long: Nuclear pore complex protein Nup214 (2090 aa).

An N-acetylglycine modification is found at Gly-2. Ser-30 bears the Phosphoserine mark. Blade repeat units follow at residues 41–93 (LLAV…PMKF), 94–150 (PIHH…DAGG), 151–193 (MVID…PSTV), 194–239 (AVTS…ESDH), 240–303 (PVRV…ERQH), 304–359 (HYYL…KSDD), and 360–404 (SLPM…FYMI). The tract at residues 41–404 (LLAVSNKYGL…DGVLCPFYMI (364 aa)) is seven-bladed beta propeller. A 44 X 2 AA repeats of F-G region spans residues 236 to 1418 (ESDHPVRVLD…AVFGSLPVTS (1183 aa)). Residue Thr-416 is modified to Phosphothreonine. Phosphoserine is present on residues Ser-421, Ser-430, and Ser-433. The interval 422–460 (LEGERQPKSPGSTPTTPTSSQAPQKLDASAAAAPASLPP) is disordered. Over residues 429–441 (KSPGSTPTTPTSS) the composition is skewed to low complexity. Residues Thr-434, Thr-437, and Thr-439 each carry the phosphothreonine modification. The tract at residues 450-586 (SAAAAPASLP…PPSTSAVKVN (137 aa)) is (Microbial infection) Binds human adenovirus 5 (HAdV-5) protein L3 (hexon). The interval 481-2076 (VFSFGSSSLK…GSGTGGFSFG (1596 aa)) is 11 X 5 AA approximate repeats. Residues 484 to 485 (FG) form repeat 1. 2 stretches are compositionally biased toward low complexity: residues 489-513 (LKSSATVTGEPPSYSSGSDSSKAAP) and 524-536 (PPSKASLAPTPAA). Positions 489 to 536 (LKSSATVTGEPPSYSSGSDSSKAAPGPGPSTFSFVPPSKASLAPTPAA) are disordered. The stretch at 548-549 (FG) is repeat 2. 2 stretches are compositionally biased toward low complexity: residues 597–629 (STPVSSSQSAPPMSPFSSASKPAASGPLSHPTP) and 637–658 (VPLKSSVLPSPSGRSAQGSSSP). A disordered region spans residues 597–700 (STPVSSSQSA…KQGHQWKDSD (104 aa)). Phosphoserine occurs at positions 651, 657, and 666. Thr-670 carries the post-translational modification Phosphothreonine. Ser-678 carries the post-translational modification Phosphoserine. Positions 680–1209 (QAKSLQPAVA…VTSTPSASGQ (530 aa)) form a coiled coil. Positions 691 to 700 (KQGHQWKDSD) are enriched in basic and acidic residues. Leucine-zipper regions lie at residues 740–768 (LRTESDDLHTFLLEIKETTESLHGDISSL) and 861–882 (LANNREIINQQRKRLNHLVDSL). A Phosphoserine modification is found at Ser-760. 4 positions are modified to phosphoserine: Ser-940, Ser-970, Ser-974, and Ser-989. The interval 987–1009 (TSSVSQSLESEDARTSCKDDEAV) is disordered. The segment covering 997 to 1007 (EDARTSCKDDE) has biased composition (basic and acidic residues). Residue Thr-1021 is modified to Phosphothreonine. Residues Ser-1023, Ser-1045, Ser-1056, and Ser-1081 each carry the phosphoserine modification. Over residues 1128–1149 (LKNNPATPSTAMGSSVPYSTAK) the composition is skewed to polar residues. A disordered region spans residues 1128–1152 (LKNNPATPSTAMGSSVPYSTAKTPH). 3 positions are modified to phosphothreonine: Thr-1134, Thr-1150, and Thr-1156. 2 stretches are compositionally biased toward polar residues: residues 1168–1188 (LINSLKPSGPTPASGQLSSGD) and 1199–1213 (AVTSTPSASGQFSKP). The tract at residues 1168-1213 (LINSLKPSGPTPASGQLSSGDKASGTAKIETAVTSTPSASGQFSKP) is disordered. A Phosphoserine modification is found at Ser-1181. Residues 1225-1226 (FG) form repeat 3. Composition is skewed to polar residues over residues 1234 to 1254 (SNFTAAQGATPSTKESSQPDA) and 1273 to 1285 (PPSGITSASNTTP). Disordered regions lie at residues 1234–1316 (SNFT…PPSK) and 1337–1408 (LRVG…TSST). Residues 1288–1299 (PAASSSRPVAPS) are compositionally biased toward low complexity. Over residues 1301–1310 (TALSTTSSKL) the composition is skewed to polar residues. Thr-1312 is subject to Phosphothreonine. Positions 1347 to 1368 (KPTNKASSTSLTSTQPTKTSGV) are enriched in polar residues. Ser-1353 carries the post-translational modification Phosphoserine. Over residues 1386 to 1408 (PPVTSSATTTSVAPPAATSTSST) the composition is skewed to low complexity. The tract at residues 1409–2084 (AVFGSLPVTS…FGSNNSSVQG (676 aa)) is 18 X 4 AA approximate repeats. Tandem repeats lie at residues 1411–1412 (FG), 1427–1428 (FG), 1441–1442 (FG), and 1473–1474 (FG). An 11 X 3 AA approximate repeats region spans residues 1427–2085 (FGGTSLSAGK…GSNNSSVQGF (659 aa)). Over residues 1438–1450 (SFSFGSQQTNSTV) the composition is skewed to polar residues. The tract at residues 1438-1467 (SFSFGSQQTNSTVPPSAPPPTTAATPLPTS) is disordered. Low complexity-rich tracts occupy residues 1479–1489 (SATTPSLPMSA) and 1508–1527 (SEVSASAASLLEEQQSAQLP). Positions 1479–1539 (SATTPSLPMS…PPQTSDSVKK (61 aa)) are disordered. Lys-1538 is covalently cross-linked (Glycyl lysine isopeptide (Lys-Gly) (interchain with G-Cter in SUMO2)). 18 tandem repeats follow at residues 1635-1636 (FG), 1674-1675 (FG), 1686-1687 (FG), 1713-1714 (FG), 1721-1722 (FG), 1726-1727 (FG), 1732-1733 (FG), 1756-1757 (FG), 1772-1773 (FG), 1786-1787 (FG), 1798-1799 (FG), 1806-1807 (FG), 1812-1813 (FG), 1819-1820 (FG), 1842-1843 (FG), 1851-1852 (FG), 1862-1863 (FG), and 1874-1875 (FG). Residues 1884–1903 (GFFSGLGGKPSQDAANKNPF) are disordered. A run of 5 repeats spans residues 1910–1911 (FG), 1922–1923 (FG), 1930–1931 (FG), 1938–1939 (FG), and 1959–1960 (FG). Ser-1963 is subject to Phosphoserine. Tandem repeats lie at residues 1970–1971 (FG), 1976–1977 (FG), and 1982–1983 (FG). Position 1985 is a phosphoserine (Ser-1985). 11 repeat units span residues 1988-1989 (FG), 1994-1995 (FG), 2012-2013 (FG), 2024-2025 (FG), 2026-2027 (FG), 2035-2036 (FG), 2046-2047 (FG), 2056-2057 (FG), 2066-2067 (FG), 2075-2076 (FG), and 2085-2086 (FG).

As to quaternary structure, homodimer. Part of the nuclear pore complex (NPC). Interacts with NUP88. Interacts with ZFP36; this interaction increases upon lipopolysaccharide (LPS) stimulation. Interacts with DDX19. Interacts with XPO1. Interacts with XPO5. (Microbial infection) Interacts with human herpes virus 1 (HHV-1) protein UL25; this interaction might be essential to the capsid docking onto the host nuclear pore. In terms of assembly, (Microbial infection) Interacts (via N-terminus) with human adenovirus 5 (HAdV-5) protein L3 (hexon); this interaction might be essential for the release of the virus genome to the nucleus. In terms of processing, probably glycosylated as it reacts with wheat germ agglutinin (WGA). In terms of tissue distribution, expressed in thymus, spleen, bone marrow, kidney, brain and testis, but hardly in all other tissues or in whole embryos during development.

The protein resides in the nucleus. Its subcellular location is the nuclear pore complex. Functionally, part of the nuclear pore complex. Has a critical role in nucleocytoplasmic transport. May serve as a docking site in the receptor-mediated import of substrates across the nuclear pore complex. (Microbial infection) Required for capsid disassembly of the human adenovirus 5 (HadV-5) leading to release of the viral genome to the nucleus (in vitro). This Homo sapiens (Human) protein is Nuclear pore complex protein Nup214 (NUP214).